Reading from the N-terminus, the 115-residue chain is U3-lycotoxin-Ls1k (115 aa).

An N-terminal signal peptide occupies residues 1–20 (MKFELLFGVLLVTLFSYSSA). Positions 21–44 (EMLDDFDQADEDELLSLIEKEEAR) are excised as a propeptide. Intrachain disulfides connect cysteine 48–cysteine 63, cysteine 55–cysteine 72, cysteine 62–cysteine 87, and cysteine 74–cysteine 85.

This sequence belongs to the neurotoxin 19 (CSTX) family. 01 subfamily. As to expression, expressed by the venom gland.

Its subcellular location is the secreted. This chain is U3-lycotoxin-Ls1k, found in Lycosa singoriensis (Wolf spider).